The chain runs to 216 residues: Elongation factor Ts (216 aa).

The involved in Mg(2+) ion dislocation from EF-Tu stretch occupies residues 81–84 (TDFV).

The protein belongs to the EF-Ts family.

Its subcellular location is the cytoplasm. Associates with the EF-Tu.GDP complex and induces the exchange of GDP to GTP. It remains bound to the aminoacyl-tRNA.EF-Tu.GTP complex up to the GTP hydrolysis stage on the ribosome. The chain is Elongation factor Ts from Geobacter sp. (strain M21).